The following is a 570-amino-acid chain: Molecular chaperone MKKS (570 aa).

Residue 192–199 (GHIILGKS) coordinates ATP. Positions 198 to 370 (KSLIVPLKGQ…FHLIPNEATI (173 aa)) are substrate-binding apical domain.

Belongs to the TCP-1 chaperonin family. In terms of assembly, component of a complex composed at least of MKKS, BBS10, BBS12, TCP1, CCT2, CCT3, CCT4, CCT5 and CCT8. Interacts with STUB1. Interacts with BBS2 (via coiled coil domain). Interacts with CCDC28B. Interacts with BBS12. Interacts with SMARCC1, a component of the SWI/SNF complexes; the interaction takes place predominantly in the cytoplasm and may modulate SMARCC1 location. Interacts with DLEC1. In terms of tissue distribution, widely expressed in adult and fetal tissues.

It localises to the cytoplasm. It is found in the cytoskeleton. Its subcellular location is the microtubule organizing center. The protein resides in the centrosome. The protein localises to the cytosol. It localises to the nucleus. Its function is as follows. Probable molecular chaperone that assists the folding of proteins upon ATP hydrolysis. Plays a role in the assembly of BBSome, a complex involved in ciliogenesis regulating transports vesicles to the cilia. May play a role in protein processing in limb, cardiac and reproductive system development. May play a role in cytokinesis. The polypeptide is Molecular chaperone MKKS (Homo sapiens (Human)).